Reading from the N-terminus, the 292-residue chain is NAC domain-containing protein 105 (292 aa).

The NAC domain occupies 12-162; the sequence is IPPGFRFHPT…GWVVCRAFKK (151 aa). The DNA-binding element occupies 112–168; that stretch reads IGMRKTLVFYRGRAPNGQKSDWIIHEYYSLESHQNSPPQEEGWVVCRAFKKRTTIPT. Residues 237 to 259 show a composition bias toward polar residues; it reads LPQLESPSLPSEITPHSTTFSEN. The disordered stretch occupies residues 237-269; sequence LPQLESPSLPSEITPHSTTFSENSSRKDDMSSE. Basic and acidic residues predominate over residues 260 to 269; it reads SSRKDDMSSE.

The protein belongs to the plant vascular related NAC-domain protein family. Interacts with NAC030/VND7. As to expression, detected in root protoxylem and metaxylem poles and in vessels of protoxylems, outermost metaxylems, inner metaxylems, shoots and hypocotyls. Expressed in roots, hypocotyls, cotyledons and leaves. Present in developing xylems. Present in root developing xylems. Specifically expressed in vessels but not in interfascicular fibers in stems.

It localises to the nucleus. In terms of biological role, transcription activator that binds to the secondary wall NAC binding element (SNBE), 5'-(T/A)NN(C/T)(T/C/G)TNNNNNNNA(A/C)GN(A/C/T)(A/T)-3', in the promoter of target genes. Involved in xylem formation by promoting the expression of secondary wall-associated transcription factors and of genes involved in secondary wall biosynthesis and programmed cell death, genes driven by the secondary wall NAC binding element (SNBE). Triggers thickening of secondary walls. In Arabidopsis thaliana (Mouse-ear cress), this protein is NAC domain-containing protein 105.